A 164-amino-acid polypeptide reads, in one-letter code: C-phycoerythrin alpha chain (164 aa).

Residues Cys82 and Cys139 each coordinate (2R,3E)-phycoerythrobilin.

The protein belongs to the phycobiliprotein family. Heterodimer of an alpha and a beta chain. In terms of processing, contains two covalently linked bilin chromophores.

The protein localises to the cellular thylakoid membrane. In terms of biological role, light-harvesting photosynthetic bile pigment-protein from the phycobiliprotein complex. The chain is C-phycoerythrin alpha chain (cpeA) from Pseudanabaena tenuis (strain PCC 7409).